The sequence spans 101 residues: Large ribosomal subunit protein uL24 (101 aa).

The protein belongs to the universal ribosomal protein uL24 family. Part of the 50S ribosomal subunit.

Functionally, one of two assembly initiator proteins, it binds directly to the 5'-end of the 23S rRNA, where it nucleates assembly of the 50S subunit. In terms of biological role, one of the proteins that surrounds the polypeptide exit tunnel on the outside of the subunit. The chain is Large ribosomal subunit protein uL24 from Streptococcus thermophilus (strain ATCC BAA-491 / LMD-9).